The chain runs to 198 residues: Inositol diphosphatase DSP4 (198 aa).

The disordered stretch occupies residues 1–23; that stretch reads MTLESYAGDVHTVPQSENSMEER. The Tyrosine-protein phosphatase domain maps to 34–188; sequence NFAMVDNGIF…LKHTPLSFSC (155 aa). The WPD loop important for active site topology stretch occupies residues 90–102; that stretch reads FGIERCKEPFVNI. Residues Asn-101 and Ile-102 each coordinate 1D-myo-inositol hexakisphosphate. Residue Cys-126 is the Phosphocysteine intermediate of the active site.

The protein belongs to the protein-tyrosine phosphatase family. Atypical dual-specificity phosphatase Siw14-like subfamily. As to expression, highly expressed in flowers and at lower levels in roots, leaves, stems and siliques.

The enzyme catalyses 5-diphospho-1D-myo-inositol 1,2,3,4,6-pentakisphosphate + H2O = 1D-myo-inositol hexakisphosphate + phosphate + H(+). It carries out the reaction 1,5-bis(diphospho)-1D-myo-inositol 2,3,4,6-tetrakisphosphate + H2O = 1-diphospho-1D-myo-inositol 2,3,4,5,6-pentakisphosphate + phosphate + 2 H(+). It catalyses the reaction 3,5-bis(diphospho)-1D-myo-inositol 1,2,4,6-tetrakisphosphate + H2O = 3-diphospho-1D-myo-inositol 1,2,4,5,6-pentakisphosphate + phosphate + 2 H(+). The catalysed reaction is 6-diphospho-1D-myo-inositol pentakisphosphate + H2O = 1D-myo-inositol hexakisphosphate + phosphate + H(+). In terms of biological role, cleaves the beta-phosphate at the 5-position of soluble inositol pyrophosphates. Has highest activity on 5-diphosphoinositol 1,2,3,4,6-pentakisphosphate (5-InsP(7)), 1,5-bis-diphosphoinositol 2,3,4,6-tetrakisphosphate (1,5-InsP(8)) and 3,5-InsP(8). Acts as a negative regulator of defense responses against the bacterial pathogen Pseudomonas syringae pv tomato strain DC3000. The sequence is that of Inositol diphosphatase DSP4 from Arabidopsis thaliana (Mouse-ear cress).